A 311-amino-acid chain; its full sequence is Ribosomal RNA small subunit methyltransferase A (311 aa).

6 residues coordinate S-adenosyl-L-methionine: Asn-29, Val-31, Gly-56, Glu-77, Asp-107, and Asn-126.

This sequence belongs to the class I-like SAM-binding methyltransferase superfamily. rRNA adenine N(6)-methyltransferase family. RsmA subfamily.

Its subcellular location is the cytoplasm. It carries out the reaction adenosine(1518)/adenosine(1519) in 16S rRNA + 4 S-adenosyl-L-methionine = N(6)-dimethyladenosine(1518)/N(6)-dimethyladenosine(1519) in 16S rRNA + 4 S-adenosyl-L-homocysteine + 4 H(+). Functionally, specifically dimethylates two adjacent adenosines (A1518 and A1519) in the loop of a conserved hairpin near the 3'-end of 16S rRNA in the 30S particle. May play a critical role in biogenesis of 30S subunits. The protein is Ribosomal RNA small subunit methyltransferase A of Mycolicibacterium vanbaalenii (strain DSM 7251 / JCM 13017 / BCRC 16820 / KCTC 9966 / NRRL B-24157 / PYR-1) (Mycobacterium vanbaalenii).